The following is a 376-amino-acid chain: Palmitoyl-[acyl-carrier-protein] 4-desaturase 2, chloroplastic (376 aa).

Residues 1–33 (MELHLALRASPLPAADPGRRPPPPRGNFATNCT) constitute a chloroplast transit peptide. 6 residues coordinate Fe cation: Glu-114, Glu-149, His-152, Glu-202, Glu-235, and His-238.

It belongs to the fatty acid desaturase type 2 family. As to quaternary structure, homodimer. Requires Fe(2+) as cofactor. In terms of tissue distribution, preferentially expressed in the flower labellum.

It localises to the plastid. The protein resides in the chloroplast stroma. It carries out the reaction hexadecanoyl-[ACP] + 2 reduced [2Fe-2S]-[ferredoxin] + O2 + 2 H(+) = (4Z)-hexadecenoyl-[ACP] + 2 oxidized [2Fe-2S]-[ferredoxin] + 2 H2O. It catalyses the reaction octadecanoyl-[ACP] + 2 reduced [2Fe-2S]-[ferredoxin] + O2 + 2 H(+) = (9Z)-octadecenoyl-[ACP] + 2 oxidized [2Fe-2S]-[ferredoxin] + 2 H2O. The protein operates within lipid metabolism; fatty acid metabolism. Functionally, converts stearoyl-ACP to oleoyl-ACP by introduction of a cis double bond between carbons 9 and 10 of the acyl chain. Converts palmitoyl-ACP to (4Z)-hexadec-4-enoyl-ACP by introduction of a cis double bond between carbons 4 and 5 of the acyl chain. Catalyzes the desaturation of saturated fatty acid 18:0 and 16:0 to generate 18:1 (delta-9) and 16:1 (delta-4) intermediates, expected to give rise to 9-alkenes and 12-alkenes, respectively. The protein is Palmitoyl-[acyl-carrier-protein] 4-desaturase 2, chloroplastic (SAD2) of Ophrys sphegodes (Early spider orchid).